The chain runs to 190 residues: Endoribonuclease YbeY (190 aa).

Residues 1 to 20 (MDVENDRPPRRGAAGERNSG) are disordered. Zn(2+)-binding residues include H147, H151, and H157.

The protein belongs to the endoribonuclease YbeY family. Requires Zn(2+) as cofactor.

The protein localises to the cytoplasm. Its function is as follows. Single strand-specific metallo-endoribonuclease involved in late-stage 70S ribosome quality control and in maturation of the 3' terminus of the 16S rRNA. This chain is Endoribonuclease YbeY, found in Nitrobacter hamburgensis (strain DSM 10229 / NCIMB 13809 / X14).